An 892-amino-acid chain; its full sequence is Alanine--tRNA ligase (892 aa).

Positions 594, 598, 702, and 706 each coordinate Zn(2+).

It belongs to the class-II aminoacyl-tRNA synthetase family. Zn(2+) serves as cofactor.

Its subcellular location is the cytoplasm. The catalysed reaction is tRNA(Ala) + L-alanine + ATP = L-alanyl-tRNA(Ala) + AMP + diphosphate. In terms of biological role, catalyzes the attachment of alanine to tRNA(Ala) in a two-step reaction: alanine is first activated by ATP to form Ala-AMP and then transferred to the acceptor end of tRNA(Ala). Also edits incorrectly charged Ser-tRNA(Ala) and Gly-tRNA(Ala) via its editing domain. The chain is Alanine--tRNA ligase from Pyrobaculum aerophilum (strain ATCC 51768 / DSM 7523 / JCM 9630 / CIP 104966 / NBRC 100827 / IM2).